Consider the following 402-residue polypeptide: Nicotinate phosphoribosyltransferase (402 aa).

The residue at position 224 (His224) is a Phosphohistidine; by autocatalysis.

Belongs to the NAPRTase family. In terms of processing, transiently phosphorylated on a His residue during the reaction cycle. Phosphorylation strongly increases the affinity for substrates and increases the rate of nicotinate D-ribonucleotide production. Dephosphorylation regenerates the low-affinity form of the enzyme, leading to product release.

The catalysed reaction is nicotinate + 5-phospho-alpha-D-ribose 1-diphosphate + ATP + H2O = nicotinate beta-D-ribonucleotide + ADP + phosphate + diphosphate. Its pathway is cofactor biosynthesis; NAD(+) biosynthesis; nicotinate D-ribonucleotide from nicotinate: step 1/1. Its function is as follows. Catalyzes the synthesis of beta-nicotinate D-ribonucleotide from nicotinate and 5-phospho-D-ribose 1-phosphate at the expense of ATP. In Neisseria meningitidis serogroup B (strain ATCC BAA-335 / MC58), this protein is Nicotinate phosphoribosyltransferase.